The sequence spans 1272 residues: AF4/FMR2 family member 2 (1272 aa).

3 disordered regions span residues 93–183 (IPKN…LTQD), 201–225 (QIGE…GEDA), and 283–302 (AYVR…PTLK). The segment covering 97–107 (SVPQNPNNKNE) has biased composition (polar residues). Residues 151 to 160 (SKPEWSRDSH) show a composition bias toward basic and acidic residues. Positions 161–183 (NPSTVLASQASGQPNKMQTLTQD) are enriched in polar residues. Ser-391 is modified (phosphoserine). 4 disordered regions span residues 418–491 (KAKP…KWQL), 535–687 (TNAS…DQEE), 779–829 (SLHA…PEKK), and 842–903 (PPCI…QDKN). Positions 426-438 (VNPPLATPQPPPA) are enriched in pro residues. Low complexity predominate over residues 439–452 (VQASGGSGSSSESE). Phosphothreonine is present on Thr-478. The segment covering 543 to 558 (EPKERPLLSLIREKAR) has biased composition (basic and acidic residues). Over residues 576-586 (STTSETVSQRT) the composition is skewed to polar residues. Residues 616 to 629 (PKEKESVELHDPPR) are compositionally biased toward basic and acidic residues. The segment covering 630–640 (GRNKATAHKPA) has biased composition (basic residues). The segment covering 818–829 (PTEVAEKIPEKK) has biased composition (basic and acidic residues). Composition is skewed to pro residues over residues 844-853 (CISPAPPHKP) and 874-883 (FPPPLSPLPE).

It belongs to the AF4 family.

The protein resides in the nucleus speckle. In terms of biological role, RNA-binding protein. Might be involved in alternative splicing regulation through an interaction with G-quartet RNA structure. This chain is AF4/FMR2 family member 2 (AFF2), found in Pan troglodytes (Chimpanzee).